Here is an 843-residue protein sequence, read N- to C-terminus: Protein translocase subunit SecA (843 aa).

ATP is bound by residues Gln91, 109-113, and Asp498; that span reads GEGKT. Over residues 796 to 825 the composition is skewed to basic and acidic residues; the sequence is DFGKAEHVSAEDGKEKAKAEPYVKDEHIGR. Positions 796 to 833 are disordered; the sequence is DFGKAEHVSAEDGKEKAKAEPYVKDEHIGRNDPCPCGS. Zn(2+)-binding residues include Cys829, Cys831, Cys840, and His841.

The protein belongs to the SecA family. As to quaternary structure, monomer and homodimer. Part of the essential Sec protein translocation apparatus which comprises SecA, SecYEG and auxiliary proteins SecDF. Other proteins may also be involved. Zn(2+) serves as cofactor.

The protein localises to the cell membrane. It localises to the cytoplasm. The catalysed reaction is ATP + H2O + cellular proteinSide 1 = ADP + phosphate + cellular proteinSide 2.. In terms of biological role, part of the Sec protein translocase complex. Interacts with the SecYEG preprotein conducting channel. Has a central role in coupling the hydrolysis of ATP to the transfer of proteins into and across the cell membrane, serving as an ATP-driven molecular motor driving the stepwise translocation of polypeptide chains across the membrane. The protein is Protein translocase subunit SecA of Staphylococcus saprophyticus subsp. saprophyticus (strain ATCC 15305 / DSM 20229 / NCIMB 8711 / NCTC 7292 / S-41).